Reading from the N-terminus, the 496-residue chain is Glycerol kinase (496 aa).

Threonine 12 is a binding site for ADP. Residues threonine 12, threonine 13, and serine 14 each contribute to the ATP site. A sn-glycerol 3-phosphate-binding site is contributed by threonine 12. Residue arginine 16 participates in ADP binding. Sn-glycerol 3-phosphate contacts are provided by arginine 82, glutamate 83, and tyrosine 134. Arginine 82, glutamate 83, and tyrosine 134 together coordinate glycerol. At histidine 230 the chain carries Phosphohistidine; by HPr. Aspartate 244 provides a ligand contact to sn-glycerol 3-phosphate. The glycerol site is built by aspartate 244 and glutamine 245. Positions 266 and 309 each coordinate ADP. Residues threonine 266, glycine 309, glutamine 313, and glycine 410 each coordinate ATP. 2 residues coordinate ADP: glycine 410 and asparagine 414.

It belongs to the FGGY kinase family. In terms of assembly, homotetramer and homodimer (in equilibrium). Post-translationally, the phosphoenolpyruvate-dependent sugar phosphotransferase system (PTS), including enzyme I, and histidine-containing protein (HPr) are required for the phosphorylation, which leads to the activation of the enzyme.

The catalysed reaction is glycerol + ATP = sn-glycerol 3-phosphate + ADP + H(+). The protein operates within polyol metabolism; glycerol degradation via glycerol kinase pathway; sn-glycerol 3-phosphate from glycerol: step 1/1. With respect to regulation, activated by phosphorylation and inhibited by fructose 1,6-bisphosphate (FBP). Key enzyme in the regulation of glycerol uptake and metabolism. Catalyzes the phosphorylation of glycerol to yield sn-glycerol 3-phosphate. The chain is Glycerol kinase from Bacillus thuringiensis subsp. konkukian (strain 97-27).